A 238-amino-acid polypeptide reads, in one-letter code: Orotidine 5'-phosphate decarboxylase (238 aa).

Substrate is bound by residues aspartate 10, lysine 32, 59-68, threonine 122, arginine 184, glutamine 193, glycine 213, and arginine 214; that span reads DLKLHDIPNT. Lysine 61 functions as the Proton donor in the catalytic mechanism.

This sequence belongs to the OMP decarboxylase family. Type 1 subfamily. As to quaternary structure, homodimer.

It carries out the reaction orotidine 5'-phosphate + H(+) = UMP + CO2. Its pathway is pyrimidine metabolism; UMP biosynthesis via de novo pathway; UMP from orotate: step 2/2. In terms of biological role, catalyzes the decarboxylation of orotidine 5'-monophosphate (OMP) to uridine 5'-monophosphate (UMP). This is Orotidine 5'-phosphate decarboxylase from Bacillus cereus (strain B4264).